The primary structure comprises 412 residues: MAIKSLNDLLAEGVSGKGVLVRSDLNVPLEYLDGNIAHISDPGRIVASVPTIRALAGAGAKVIVTAHLGRPDGKPDPKLSLAPVGAALGELLGQHVQVAGDVVGTDALARAEGLTDGDVLLLENIRFDPRETSKDDAQRLALARELAELVGGPTGTGGAFVSDGFGVVHRKQASVYDVATLLPHYAGGLVAAEVEVLRVLTASTERPYAVVLGGSKVSDKLAVIESLATKADSLVIGGGMCFTFLAAQGLPVGKSLVQLEMVDTCKRLLDTYADVIHLPMDIVAADEFAADSPSEIVAADAIPDSKMGLDIGPESVKRFAAVLSNAKTIFWNGPMGVFEFPAFAAGTRGVAEAIIAATEKGAFSVVGGGDSAAAVRALDLPDDGFSHISTGGGASLEYLEGKVLPGIDVLED.

Substrate is bound by residues 24 to 26 (DLN), Arg44, 67 to 70 (HLGR), Arg126, and Arg170. Residues Lys220, Gly308, Glu339, and 368–371 (GGDS) each bind ATP.

This sequence belongs to the phosphoglycerate kinase family. Monomer.

It localises to the cytoplasm. The catalysed reaction is (2R)-3-phosphoglycerate + ATP = (2R)-3-phospho-glyceroyl phosphate + ADP. It participates in carbohydrate degradation; glycolysis; pyruvate from D-glyceraldehyde 3-phosphate: step 2/5. The polypeptide is Phosphoglycerate kinase (Mycobacteroides abscessus (strain ATCC 19977 / DSM 44196 / CCUG 20993 / CIP 104536 / JCM 13569 / NCTC 13031 / TMC 1543 / L948) (Mycobacterium abscessus)).